Reading from the N-terminus, the 92-residue chain is Large ribosomal subunit protein uL23c (92 aa).

This sequence belongs to the universal ribosomal protein uL23 family. As to quaternary structure, part of the 50S ribosomal subunit.

Its subcellular location is the plastid. The protein localises to the chloroplast. In terms of biological role, binds to 23S rRNA. This chain is Large ribosomal subunit protein uL23c (rpl23), found in Nephroselmis olivacea (Green alga).